Here is a 419-residue protein sequence, read N- to C-terminus: Peroxisomal membrane protein PMP47B (419 aa).

Solcar repeat units lie at residues 6 to 120 (YDDL…TGKT), 142 to 230 (LSVW…LKSF), and 239 to 369 (VTPV…LLIL). The chain crosses the membrane as a helical span at residues 12–32 (AFAGAGGGLLSMTLTYPLVTL). Residues 44–53 (KNEEEEKENS) show a composition bias toward basic and acidic residues. Positions 44 to 69 (KNEEEEKENSNEDGSLSPKSSNTSNI) are disordered. The segment covering 56 to 69 (DGSLSPKSSNTSNI) has biased composition (polar residues). 3 helical membrane passes run 98-118 (SALFGIAVTNFVYYYFYELTG), 204-224 (FTGIVPALFLVLNPIIQYTIF), and 245-265 (LLLGAFGKLIATIITYPYITL). The tract at residues 274–305 (MTENNEDSEKERTDSVQSLPEDGSDEDNSKEN) is disordered. Helical transmembrane passes span 310–330 (TINKIISKLPSPIVSMFIIGY) and 349–369 (LLQSILNAAFLFYFKEELLIL).

This sequence belongs to the mitochondrial carrier (TC 2.A.29) family.

Its subcellular location is the peroxisome membrane. Its function is as follows. May have transport activity. The polypeptide is Peroxisomal membrane protein PMP47B (PMP47B) (Candida boidinii (Yeast)).